A 567-amino-acid chain; its full sequence is Proline--tRNA ligase (567 aa).

It belongs to the class-II aminoacyl-tRNA synthetase family. ProS type 1 subfamily. In terms of assembly, homodimer.

The protein localises to the cytoplasm. The enzyme catalyses tRNA(Pro) + L-proline + ATP = L-prolyl-tRNA(Pro) + AMP + diphosphate. Catalyzes the attachment of proline to tRNA(Pro) in a two-step reaction: proline is first activated by ATP to form Pro-AMP and then transferred to the acceptor end of tRNA(Pro). As ProRS can inadvertently accommodate and process non-cognate amino acids such as alanine and cysteine, to avoid such errors it has two additional distinct editing activities against alanine. One activity is designated as 'pretransfer' editing and involves the tRNA(Pro)-independent hydrolysis of activated Ala-AMP. The other activity is designated 'posttransfer' editing and involves deacylation of mischarged Ala-tRNA(Pro). The misacylated Cys-tRNA(Pro) is not edited by ProRS. This Campylobacter curvus (strain 525.92) protein is Proline--tRNA ligase.